The chain runs to 584 residues: MTFYLSGFRSIPKLWKSNPYFELGPATSSTPFFLCAIGNQQRWFSVKPTTPPNSKALNLLDTKARTHRKGNDNNGQVSSDPHYFAAGAAKKRSHIGANPQNQGHALPVRSSVQLPTKPLNSAEWDKLKEDFKGKASFEDFIISQMARNCCSVDVAKSLLAWVAAKNNGIVGYNLLVKYLYLCVFHKQTSEVIDVYEIMKAKYKSLESGGYTLLIRGLIHSDRWRESLLLLEDIKKVMVPSKKNYGDCIQGALLHQDVNTAWNLYQELIGHNLIPPLETLKAFFDYGKDINDDHYSDKLLDILLYLRNNQLYPGESFAHSIKTWFESIPGRQWKGQFTTIQKSGQCSGCGRTIEPIHLSPEEYEFLKEKIMRDVIDGGDQYKKTTPQELKRFESFVNSCPPFDIVIDGLNVAKMFPKGRESQNLLGVVSQLAQQNLQLLVLGRKHMLRPSSQWRKEEMEQVRKQAHCFFADNISEDDPFLLYATLNSGNHCKFITKDLLRDHKACLPDARTQRLFFKWQQGHQLAIMKGFQKSKLTFQHILSYDTVVQRTGDSWHIPYDEDLVQRSSCEVPTKWLCLQRKTPDPC.

Residues 1 to 43 (MTFYLSGFRSIPKLWKSNPYFELGPATSSTPFFLCAIGNQQRW) constitute a mitochondrion transit peptide. In terms of domain architecture, PRORP spans 339 to 575 (IQKSGQCSGC…SCEVPTKWLC (237 aa)). 2 residues coordinate Zn(2+): Cys-345 and Cys-348. 4 residues coordinate Mg(2+): Asp-406, Asp-475, Asp-476, and Asp-496. Residues His-554 and Cys-575 each coordinate Zn(2+).

It belongs to the PPR family. P subfamily. In terms of assembly, catalytic component of mitochondrial ribonuclease P, a complex composed of TRMT10C/MRPP1, HSD17B10/MRPP2 and PRORP/MRPP3. Mg(2+) is required as a cofactor. The cofactor is Mn(2+). Post-translationally, degraded by LONP1 following mitochondrial unfolded protein response, probably leading to inhibit translation in mitochondrion. Detected, after the onset of hearing, in the organ of Corti around the afferent and efferent synapses of the inner hair cells and the efferent synapses of the outer hair cells.

The protein resides in the mitochondrion. The enzyme catalyses Endonucleolytic cleavage of RNA, removing 5'-extranucleotides from tRNA precursor.. Its function is as follows. Catalytic ribonuclease component of mitochondrial ribonuclease P, a complex composed of TRMT10C/MRPP1, HSD17B10/MRPP2 and PRORP, which cleaves tRNA molecules in their 5'-ends. The presence of TRMT10C/MRPP1, HSD17B10/MRPP2 is required to catalyze tRNA molecules in their 5'-ends. This is Mitochondrial ribonuclease P catalytic subunit (Prorp) from Mus musculus (Mouse).